The following is a 673-amino-acid chain: DNA ligase (673 aa).

Residues 36–40 (DAEYD), 85–86 (SL), and E116 each bind NAD(+). K118 (N6-AMP-lysine intermediate) is an active-site residue. R139, E176, K291, and K315 together coordinate NAD(+). Residues C409, C412, C427, and C433 each contribute to the Zn(2+) site. A BRCT domain is found at 592–673 (RGEQPLAGRT…LQALLQEHGR (82 aa)).

It belongs to the NAD-dependent DNA ligase family. LigA subfamily. The cofactor is Mg(2+). It depends on Mn(2+) as a cofactor.

The catalysed reaction is NAD(+) + (deoxyribonucleotide)n-3'-hydroxyl + 5'-phospho-(deoxyribonucleotide)m = (deoxyribonucleotide)n+m + AMP + beta-nicotinamide D-nucleotide.. Functionally, DNA ligase that catalyzes the formation of phosphodiester linkages between 5'-phosphoryl and 3'-hydroxyl groups in double-stranded DNA using NAD as a coenzyme and as the energy source for the reaction. It is essential for DNA replication and repair of damaged DNA. In Alkalilimnicola ehrlichii (strain ATCC BAA-1101 / DSM 17681 / MLHE-1), this protein is DNA ligase.